An 82-amino-acid chain; its full sequence is Penaeidin-3e (82 aa).

An N-terminal signal peptide occupies residues 1 to 19; that stretch reads MRLVVCLVFLAPFALVCHG. At Q20 the chain carries Pyrrolidone carboxylic acid. Intrachain disulfides connect C51–C66, C55–C73, and C67–C74. S81 carries the post-translational modification Serine amide.

It belongs to the penaeidin family.

Its subcellular location is the cytoplasmic granule. Its function is as follows. Antibacterial and antifungal activity. Presents chitin-binding activity. In Penaeus vannamei (Whiteleg shrimp), this protein is Penaeidin-3e.